We begin with the raw amino-acid sequence, 132 residues long: MYNVYRLIMYVCATLYDGYLQVRILSINNAVATLTFSESTMGSGARLPFSMPPKGISTKKSLLIFKFVLTPWLSFPTTRTTGSSLHNPFKSCMLIVFPTVYFSDVALAKWLVINVQPPISCDLVKNSNGLST.

This is an uncharacterized protein from Saccharomyces cerevisiae (strain ATCC 204508 / S288c) (Baker's yeast).